We begin with the raw amino-acid sequence, 283 residues long: E3 ubiquitin-protein ligase MARCHF5 (283 aa).

The RING-CH-type zinc finger occupies 9 to 78; it reads VQQMLDRSCW…PQCNAEYLIV (70 aa). Zn(2+)-binding residues include Cys-17, Cys-20, Cys-36, Cys-38, His-46, Cys-49, Cys-68, and Cys-71. Transmembrane regions (helical) follow at residues 102 to 122, 142 to 162, 212 to 232, and 241 to 261; these read FAAA…YGAV, PLFL…GKMI, ILCG…LMFS, and TILG…YFKQ.

It localises to the mitochondrion outer membrane. The protein resides in the endoplasmic reticulum membrane. The enzyme catalyses S-ubiquitinyl-[E2 ubiquitin-conjugating enzyme]-L-cysteine + [acceptor protein]-L-lysine = [E2 ubiquitin-conjugating enzyme]-L-cysteine + N(6)-ubiquitinyl-[acceptor protein]-L-lysine.. Its pathway is protein modification; protein ubiquitination. Its function is as follows. Mitochondrial E3 ubiquitin-protein ligase that plays a crucial role in the control of mitochondrial morphology by acting as a positive regulator of mitochondrial fission. May play a role in the prevention of cell senescence acting as a regulator of mitochondrial quality control. This is E3 ubiquitin-protein ligase MARCHF5 (marchf5) from Xenopus laevis (African clawed frog).